The sequence spans 188 residues: MVGGISRTGWLVAAALVALLAAILIFMGRPPICPCGTVSLWHGTVQSNQNSQQISDWYSFSHIIHGFIFYGVLRWIMPERALWVPLAIAIGTEGAWEILENSPLIIDRYREVTMAFGYSGDSVLNSVSDTLFMVAGFLAAGRMRWWVTAALAIAFELFTLWTIRDNLTLNVLMLVSPVEAIKDWQAGG.

A run of 3 helical transmembrane segments spans residues Thr8–Gly28, Trp57–Met77, and Met143–Ile163.

Belongs to the UPF0314 family.

It localises to the cell membrane. The protein is UPF0314 protein Sala_3154 of Sphingopyxis alaskensis (strain DSM 13593 / LMG 18877 / RB2256) (Sphingomonas alaskensis).